A 185-amino-acid chain; its full sequence is Large ribosomal subunit protein bL25 (185 aa).

It belongs to the bacterial ribosomal protein bL25 family. CTC subfamily. As to quaternary structure, part of the 50S ribosomal subunit; part of the 5S rRNA/L5/L18/L25 subcomplex. Contacts the 5S rRNA. Binds to the 5S rRNA independently of L5 and L18.

This is one of the proteins that binds to the 5S RNA in the ribosome where it forms part of the central protuberance. The protein is Large ribosomal subunit protein bL25 of Chlamydia pneumoniae (Chlamydophila pneumoniae).